Reading from the N-terminus, the 311-residue chain is tRNA-cytidine(32) 2-sulfurtransferase (311 aa).

The short motif at 47–52 is the PP-loop motif element; sequence SGGKDS. C122, C125, and C213 together coordinate [4Fe-4S] cluster.

Belongs to the TtcA family. In terms of assembly, homodimer. It depends on Mg(2+) as a cofactor. [4Fe-4S] cluster is required as a cofactor.

The protein localises to the cytoplasm. It catalyses the reaction cytidine(32) in tRNA + S-sulfanyl-L-cysteinyl-[cysteine desulfurase] + AH2 + ATP = 2-thiocytidine(32) in tRNA + L-cysteinyl-[cysteine desulfurase] + A + AMP + diphosphate + H(+). Its pathway is tRNA modification. Functionally, catalyzes the ATP-dependent 2-thiolation of cytidine in position 32 of tRNA, to form 2-thiocytidine (s(2)C32). The sulfur atoms are provided by the cysteine/cysteine desulfurase (IscS) system. The sequence is that of tRNA-cytidine(32) 2-sulfurtransferase from Escherichia coli O127:H6 (strain E2348/69 / EPEC).